Reading from the N-terminus, the 346-residue chain is Cell division protein FtsZ 2 (346 aa).

GTP contacts are provided by residues 23-27 (GGGGN), 110-112 (GTG), Glu141, Arg145, and Asp189. Residues 320–346 (SNRSAQPTAPEAMNGQTAAAVPSRTLQ) form a disordered region.

This sequence belongs to the FtsZ family. Homodimer. Polymerizes to form a dynamic ring structure in a strictly GTP-dependent manner. Interacts directly with several other division proteins.

The protein localises to the cytoplasm. Essential cell division protein that forms a contractile ring structure (Z ring) at the future cell division site. The regulation of the ring assembly controls the timing and the location of cell division. One of the functions of the FtsZ ring is to recruit other cell division proteins to the septum to produce a new cell wall between the dividing cells. Binds GTP and shows GTPase activity. The protein is Cell division protein FtsZ 2 of Rhizobium meliloti (strain 1021) (Ensifer meliloti).